Here is a 156-residue protein sequence, read N- to C-terminus: Endogenous retrovirus group K member 19 Pro protein (156 aa).

In terms of domain architecture, Peptidase A2 spans Phe21 to Leu96. The active site involves Asp26. The region spanning Tyr111–Phe156 is the G-patch domain.

This sequence belongs to the peptidase A2 family. HERV class-II K(HML-2) subfamily. As to quaternary structure, active as a homodimer. Autoproteolytically processed at the N-terminus. Expected C-terminal autoprocessing not detected. The sequence shown is that of the processed Pro protein.

The enzyme catalyses Processing at the authentic HIV-1 PR recognition site and release of the mature p17 matrix and the p24 capsid protein, as a result of the cleavage of the -SQNY-|-PIVQ- cleavage site.. Its function is as follows. Retroviral proteases have roles in the processing of the primary translation products and the maturation of the viral particle. Endogenous Pro proteins may have kept, lost or modified their original function during evolution. The protein is Endogenous retrovirus group K member 19 Pro protein (ERVK-19) of Homo sapiens (Human).